Here is a 421-residue protein sequence, read N- to C-terminus: Shaggy-related protein kinase kappa (421 aa).

Positions 1 to 10 (MASSGLGNGV) are enriched in gly residues. The segment at 1–60 (MASSGLGNGVGTSRSAKGLKSSSSSVDWLTRDLAETRIRDKVETDDERDSEPDIIDGAGA) is disordered. The segment covering 29–42 (LTRDLAETRIRDKV) has biased composition (basic and acidic residues). A compositionally biased stretch (acidic residues) spans 43–54 (ETDDERDSEPDI). Positions 83 to 367 (YISEHVVGTG…ALEACIHPLF (285 aa)) constitute a Protein kinase domain. ATP is bound by residues 89 to 97 (VGTGSFGMV) and lysine 112. The Proton acceptor role is filled by aspartate 208. Phosphotyrosine is present on tyrosine 243.

This sequence belongs to the protein kinase superfamily. CMGC Ser/Thr protein kinase family. GSK-3 subfamily. Post-translationally, autophosphorylated mainly on threonine and serine residues. Expressed exclusively in inflorescences.

It catalyses the reaction L-seryl-[protein] + ATP = O-phospho-L-seryl-[protein] + ADP + H(+). The catalysed reaction is L-threonyl-[protein] + ATP = O-phospho-L-threonyl-[protein] + ADP + H(+). Functionally, may mediate extracellular signals to regulate transcription in differentiating cells. This chain is Shaggy-related protein kinase kappa (ASK10), found in Arabidopsis thaliana (Mouse-ear cress).